A 434-amino-acid polypeptide reads, in one-letter code: Elongation factor 1-alpha (434 aa).

The region spanning 5-232 is the tr-type G domain; it reads KPHINLVVIG…DNVHPPKRPV (228 aa). The interval 14–21 is G1; that stretch reads GHVVAGKS. 14 to 21 contacts GTP; sequence GHVVAGKS. Positions 70 to 74 are G2; that stretch reads GITID. Positions 91 to 94 are G3; sequence DAPG. GTP is bound by residues 91–95 and 153–156; these read DAPGH and NKMD. Residues 153–156 form a G4 region; the sequence is NKMD. A G5 region spans residues 196-198; that stretch reads SGF.

It belongs to the TRAFAC class translation factor GTPase superfamily. Classic translation factor GTPase family. EF-Tu/EF-1A subfamily.

The protein localises to the cytoplasm. In terms of biological role, this protein promotes the GTP-dependent binding of aminoacyl-tRNA to the A-site of ribosomes during protein biosynthesis. This chain is Elongation factor 1-alpha, found in Blastocystis hominis.